The sequence spans 658 residues: Glycogen debranching enzyme (658 aa).

Asp-336 (nucleophile) is an active-site residue. Glu-371 (proton donor) is an active-site residue. Residues 459–484 (EANGEENRDGTNSNYSDNHGKEGLGG) are disordered.

This sequence belongs to the glycosyl hydrolase 13 family.

The catalysed reaction is Hydrolysis of (1-&gt;6)-alpha-D-glucosidic linkages to branches with degrees of polymerization of three or four glucose residues in limit dextrin.. Its pathway is glycan degradation; glycogen degradation. Functionally, removes maltotriose and maltotetraose chains that are attached by 1,6-alpha-linkage to the limit dextrin main chain, generating a debranched limit dextrin. In Salmonella dublin (strain CT_02021853), this protein is Glycogen debranching enzyme.